The sequence spans 231 residues: Endo-1,4-beta-xylanase A (231 aa).

The N-terminal stretch at 1 to 19 (MVSFKSLLVAVSALTGALA) is a signal peptide. Residue Asn32 is glycosylated (N-linked (GlcNAc...) asparagine). The GH11 domain occupies 41–229 (QVTGNSEGYH…SSGSSSIYVQ (189 aa)). Glu125 acts as the Nucleophile in catalysis. Glu216 (proton donor) is an active-site residue.

The protein belongs to the glycosyl hydrolase 11 (cellulase G) family.

It is found in the secreted. The enzyme catalyses Endohydrolysis of (1-&gt;4)-beta-D-xylosidic linkages in xylans.. It functions in the pathway glycan degradation; xylan degradation. Its activity is regulated as follows. Inhibited by the proteinaceous endoxylanase inhibitor I from T.aestivum (TAXI-I). Its function is as follows. Endo-1,4-beta-xylanase involved in the hydrolysis of xylan, a major structural heterogeneous polysaccharide found in plant biomass representing the second most abundant polysaccharide in the biosphere, after cellulose. Plays an important role in causing fusarium head blight (FHB) on cereal crops. The polypeptide is Endo-1,4-beta-xylanase A (XYLA) (Gibberella zeae (strain ATCC MYA-4620 / CBS 123657 / FGSC 9075 / NRRL 31084 / PH-1) (Wheat head blight fungus)).